A 1500-amino-acid chain; its full sequence is DNA-directed RNA polymerase subunit beta' (1500 aa).

Residues cysteine 60, cysteine 62, cysteine 75, and cysteine 78 each coordinate Zn(2+). The interval 180-199 is disordered; that stretch reads DLGGMETAQRSTQRQIEEDY. Mg(2+) contacts are provided by aspartate 626, aspartate 628, and aspartate 630. Positions 1002, 1075, 1082, and 1085 each coordinate Zn(2+). Residues 1440-1500 form a disordered region; it reads EVQQAEKSAE…DSDHPDLSSL (61 aa). Polar residues predominate over residues 1449–1468; it reads EPTTTALPTTNGHQAPQSDT.

Belongs to the RNA polymerase beta' chain family. In terms of assembly, the RNAP catalytic core consists of 2 alpha, 1 beta, 1 beta' and 1 omega subunit. When a sigma factor is associated with the core the holoenzyme is formed, which can initiate transcription. Mg(2+) is required as a cofactor. It depends on Zn(2+) as a cofactor.

The enzyme catalyses RNA(n) + a ribonucleoside 5'-triphosphate = RNA(n+1) + diphosphate. DNA-dependent RNA polymerase catalyzes the transcription of DNA into RNA using the four ribonucleoside triphosphates as substrates. The protein is DNA-directed RNA polymerase subunit beta' of Chloroflexus aggregans (strain MD-66 / DSM 9485).